A 99-amino-acid polypeptide reads, in one-letter code: MNQERVFKVLLGPHVSEKATVLADKKGQFVFKVATDATKLEIKKAVESLFSVKVERVTTLNVLGKSKRTARGLGKRNDWKKAVISLQPGQDLDFSSSAE.

Belongs to the universal ribosomal protein uL23 family. In terms of assembly, part of the 50S ribosomal subunit. Contacts protein L29, and trigger factor when it is bound to the ribosome.

One of the early assembly proteins it binds 23S rRNA. One of the proteins that surrounds the polypeptide exit tunnel on the outside of the ribosome. Forms the main docking site for trigger factor binding to the ribosome. This chain is Large ribosomal subunit protein uL23, found in Pseudomonas fluorescens (strain SBW25).